The following is a 464-amino-acid chain: Glutamate--tRNA ligase 2 (464 aa).

Positions 11-21 (PSPTGFLHIGS) match the 'HIGH' region motif. The short motif at 240–244 (KLSKR) is the 'KMSKS' region element. Residue Lys-243 participates in ATP binding.

It belongs to the class-I aminoacyl-tRNA synthetase family. Glutamate--tRNA ligase type 1 subfamily. Monomer.

The protein localises to the cytoplasm. It catalyses the reaction tRNA(Glu) + L-glutamate + ATP = L-glutamyl-tRNA(Glu) + AMP + diphosphate. Functionally, catalyzes the attachment of glutamate to tRNA(Glu) in a two-step reaction: glutamate is first activated by ATP to form Glu-AMP and then transferred to the acceptor end of tRNA(Glu). This chain is Glutamate--tRNA ligase 2, found in Rickettsia bellii (strain OSU 85-389).